A 422-amino-acid chain; its full sequence is Serine hydroxymethyltransferase (422 aa).

(6S)-5,6,7,8-tetrahydrofolate contacts are provided by residues Leu120 and 124–126; that span reads GHL. Lys228 bears the N6-(pyridoxal phosphate)lysine mark.

Belongs to the SHMT family. In terms of assembly, homodimer. Requires pyridoxal 5'-phosphate as cofactor.

The protein localises to the cytoplasm. It catalyses the reaction (6R)-5,10-methylene-5,6,7,8-tetrahydrofolate + glycine + H2O = (6S)-5,6,7,8-tetrahydrofolate + L-serine. The protein operates within one-carbon metabolism; tetrahydrofolate interconversion. It participates in amino-acid biosynthesis; glycine biosynthesis; glycine from L-serine: step 1/1. Functionally, catalyzes the reversible interconversion of serine and glycine with tetrahydrofolate (THF) serving as the one-carbon carrier. This reaction serves as the major source of one-carbon groups required for the biosynthesis of purines, thymidylate, methionine, and other important biomolecules. Also exhibits THF-independent aldolase activity toward beta-hydroxyamino acids, producing glycine and aldehydes, via a retro-aldol mechanism. The chain is Serine hydroxymethyltransferase from Actinobacillus succinogenes (strain ATCC 55618 / DSM 22257 / CCUG 43843 / 130Z).